A 279-amino-acid polypeptide reads, in one-letter code: MAEPILSIEGVSFRYPNQSDYAVQNVSFTAERGEWLAIVGHNGSGKSTIARMLIGLLRPERGAIRLFGRLLNDATVWEVRRRVGLVFQNPDNQFVGATVEDDIAFALENNGIPRLEMVERIREAIRQVHMEPFLHYEPHRLSGGQKQRVAIAGILALRPDMIILDEATSMLDPRGREEVLETVRRLNRQQRITVLSITHDLEEAAKADRLIVMNKGEVMAEGTPEQIFRLGSKLERIGLDLPFAVKMGSRLREQGIPLRAGYFTTEELVEELWTLYSKK.

Residues 6 to 240 enclose the ABC transporter domain; the sequence is LSIEGVSFRY…GSKLERIGLD (235 aa). 40-47 serves as a coordination point for ATP; the sequence is GHNGSGKS.

The protein belongs to the ABC transporter superfamily. Energy-coupling factor EcfA family. In terms of assembly, forms a stable energy-coupling factor (ECF) transporter complex composed of 2 membrane-embedded substrate-binding proteins (S component), 2 ATP-binding proteins (A component) and 2 transmembrane proteins (T component).

Its subcellular location is the cell membrane. Functionally, ATP-binding (A) component of a common energy-coupling factor (ECF) ABC-transporter complex. Unlike classic ABC transporters this ECF transporter provides the energy necessary to transport a number of different substrates. This is Energy-coupling factor transporter ATP-binding protein EcfA1 from Geobacillus kaustophilus (strain HTA426).